Reading from the N-terminus, the 269-residue chain is 3-methyl-2-oxobutanoate hydroxymethyltransferase (269 aa).

Mg(2+) is bound by residues D50 and D89. 3-methyl-2-oxobutanoate-binding positions include 50–51 (DS), D89, and K119. E121 lines the Mg(2+) pocket. The Proton acceptor role is filled by E187.

Belongs to the PanB family. As to quaternary structure, homodecamer; pentamer of dimers. Mg(2+) is required as a cofactor.

The protein resides in the cytoplasm. It carries out the reaction 3-methyl-2-oxobutanoate + (6R)-5,10-methylene-5,6,7,8-tetrahydrofolate + H2O = 2-dehydropantoate + (6S)-5,6,7,8-tetrahydrofolate. It participates in cofactor biosynthesis; (R)-pantothenate biosynthesis; (R)-pantoate from 3-methyl-2-oxobutanoate: step 1/2. Functionally, catalyzes the reversible reaction in which hydroxymethyl group from 5,10-methylenetetrahydrofolate is transferred onto alpha-ketoisovalerate to form ketopantoate. This chain is 3-methyl-2-oxobutanoate hydroxymethyltransferase, found in Corynebacterium efficiens (strain DSM 44549 / YS-314 / AJ 12310 / JCM 11189 / NBRC 100395).